The chain runs to 338 residues: Glycerol-3-phosphate dehydrogenase [NAD(P)+] (338 aa).

Positions 14, 15, 35, and 109 each coordinate NADPH. Sn-glycerol 3-phosphate-binding residues include K109, G138, and T140. A142 provides a ligand contact to NADPH. The sn-glycerol 3-phosphate site is built by K194, D247, S257, R258, and N259. Residue K194 is the Proton acceptor of the active site. R258 serves as a coordination point for NADPH. NADPH is bound by residues V282 and E284.

This sequence belongs to the NAD-dependent glycerol-3-phosphate dehydrogenase family.

It is found in the cytoplasm. It catalyses the reaction sn-glycerol 3-phosphate + NAD(+) = dihydroxyacetone phosphate + NADH + H(+). It carries out the reaction sn-glycerol 3-phosphate + NADP(+) = dihydroxyacetone phosphate + NADPH + H(+). It functions in the pathway membrane lipid metabolism; glycerophospholipid metabolism. In terms of biological role, catalyzes the reduction of the glycolytic intermediate dihydroxyacetone phosphate (DHAP) to sn-glycerol 3-phosphate (G3P), the key precursor for phospholipid synthesis. This Shewanella baltica (strain OS195) protein is Glycerol-3-phosphate dehydrogenase [NAD(P)+].